We begin with the raw amino-acid sequence, 261 residues long: Taurine import ATP-binding protein TauB (261 aa).

Residues 4-233 (LQLEGIGAHY…RYSAGESARA (230 aa)) enclose the ABC transporter domain. An ATP-binding site is contributed by 38-45 (GPSGSGKT).

The protein belongs to the ABC transporter superfamily. Taurine importer (TC 3.A.1.17.1) family. The complex is composed of two ATP-binding proteins (TauB), two transmembrane proteins (TauC) and a solute-binding protein (TauA).

Its subcellular location is the cell inner membrane. The catalysed reaction is taurine(out) + ATP + H2O = taurine(in) + ADP + phosphate + H(+). Its function is as follows. Part of the ABC transporter complex TauABC involved in taurine import. Responsible for energy coupling to the transport system. The protein is Taurine import ATP-binding protein TauB of Pseudomonas syringae pv. tomato (strain ATCC BAA-871 / DC3000).